We begin with the raw amino-acid sequence, 595 residues long: DNA primase (595 aa).

The CHC2-type zinc finger occupies 38-62 (CPFHQEKTPSFTVSNSKRFFYCFGC). Residues 250-332 (NHSILVEGYF…EKKISFIRLP (83 aa)) enclose the Toprim domain. E256, D300, and D302 together coordinate Mg(2+).

It belongs to the DnaG primase family. In terms of assembly, monomer. Interacts with DnaB. Zn(2+) is required as a cofactor. Mg(2+) serves as cofactor.

The enzyme catalyses ssDNA + n NTP = ssDNA/pppN(pN)n-1 hybrid + (n-1) diphosphate.. Functionally, RNA polymerase that catalyzes the synthesis of short RNA molecules used as primers for DNA polymerase during DNA replication. The chain is DNA primase from Rickettsia conorii (strain ATCC VR-613 / Malish 7).